A 61-amino-acid chain; its full sequence is Probable tautomerase BH3814 (61 aa).

Residue Pro2 is the Proton acceptor; via imino nitrogen of the active site.

Belongs to the 4-oxalocrotonate tautomerase family.

This Halalkalibacterium halodurans (strain ATCC BAA-125 / DSM 18197 / FERM 7344 / JCM 9153 / C-125) (Bacillus halodurans) protein is Probable tautomerase BH3814.